A 165-amino-acid polypeptide reads, in one-letter code: Ribosome maturation factor RimM (165 aa).

The PRC barrel domain occupies 89–161 (EADTHYVVDL…KIVIKPVRQW (73 aa)).

It belongs to the RimM family. Binds ribosomal protein uS19.

It is found in the cytoplasm. Functionally, an accessory protein needed during the final step in the assembly of 30S ribosomal subunit, possibly for assembly of the head region. Essential for efficient processing of 16S rRNA. May be needed both before and after RbfA during the maturation of 16S rRNA. It has affinity for free ribosomal 30S subunits but not for 70S ribosomes. The chain is Ribosome maturation factor RimM from Clostridium botulinum (strain Eklund 17B / Type B).